The primary structure comprises 195 residues: 3-isopropylmalate dehydratase small subunit (195 aa).

This sequence belongs to the LeuD family. LeuD type 1 subfamily. In terms of assembly, heterodimer of LeuC and LeuD.

The enzyme catalyses (2R,3S)-3-isopropylmalate = (2S)-2-isopropylmalate. It functions in the pathway amino-acid biosynthesis; L-leucine biosynthesis; L-leucine from 3-methyl-2-oxobutanoate: step 2/4. Its function is as follows. Catalyzes the isomerization between 2-isopropylmalate and 3-isopropylmalate, via the formation of 2-isopropylmaleate. The sequence is that of 3-isopropylmalate dehydratase small subunit from Corynebacterium kroppenstedtii (strain DSM 44385 / JCM 11950 / CIP 105744 / CCUG 35717).